We begin with the raw amino-acid sequence, 62 residues long: High-potential iron-sulfur protein (62 aa).

4 residues coordinate [4Fe-4S] cluster: Cys22, Cys25, Cys40, and Cys55.

Belongs to the high-potential iron-sulfur protein (HiPIP) family. Homodimer.

Its function is as follows. Specific class of high-redox-potential 4Fe-4S ferredoxins. Functions in anaerobic electron transport in most purple and in some other photosynthetic bacteria and in at least one genus (Paracoccus) of halophilic, denitrifying bacteria. The sequence is that of High-potential iron-sulfur protein (hip) from Rhodocyclus tenuis (Rhodospirillum tenue).